We begin with the raw amino-acid sequence, 118 residues long: Large ribosomal subunit protein uL18 (118 aa).

The protein belongs to the universal ribosomal protein uL18 family. In terms of assembly, part of the 50S ribosomal subunit; part of the 5S rRNA/L5/L18/L25 subcomplex. Contacts the 5S and 23S rRNAs.

Functionally, this is one of the proteins that bind and probably mediate the attachment of the 5S RNA into the large ribosomal subunit, where it forms part of the central protuberance. The sequence is that of Large ribosomal subunit protein uL18 from Rickettsia peacockii (strain Rustic).